A 406-amino-acid chain; its full sequence is Elongation factor Tu-B (406 aa).

The 206-residue stretch at 10-215 folds into the tr-type G domain; it reads KPHVNVGTIG…AIDEYIPTPV (206 aa). The tract at residues 19-26 is G1; the sequence is GHVDHGKT. Position 19-26 (19-26) interacts with GTP; the sequence is GHVDHGKT. Mg(2+) is bound at residue T26. Residues 61–65 are G2; that stretch reads GITIN. The tract at residues 82-85 is G3; it reads DCPG. GTP contacts are provided by residues 82 to 86 and 137 to 140; these read DCPGH and NKVD. Residues 137–140 are G4; it reads NKVD. The segment at 175–177 is G5; sequence SAL. Position 395 is a phosphothreonine (T395).

Belongs to the TRAFAC class translation factor GTPase superfamily. Classic translation factor GTPase family. EF-Tu/EF-1A subfamily. Monomer. Phosphorylated on a threonine.

The protein resides in the cytoplasm. The catalysed reaction is GTP + H2O = GDP + phosphate + H(+). Functionally, GTP hydrolase that promotes the GTP-dependent binding of aminoacyl-tRNA to the A-site of ribosomes during protein biosynthesis. Its function is as follows. Protects glycyl-tRNA(Gly) from hydrolysis by E.coli D-aminoacyl-tRNA deacylase (dtd). This chain is Elongation factor Tu-B, found in Thermus thermophilus (strain ATCC 27634 / DSM 579 / HB8).